The primary structure comprises 405 residues: Formin-like protein 15a (405 aa).

A disordered region spans residues 1 to 31; it reads MSLVEISGSDAMAAPMPGRVPPPPPRPPPMP. Over residues 18–31 the composition is skewed to pro residues; sequence GRVPPPPPRPPPMP. Positions 52–405 constitute an FH2 domain; that stretch reads FPRPAKKRAS…VCWFFVRLMI (354 aa).

Belongs to the formin-like family. Class-II subfamily.

In Arabidopsis thaliana (Mouse-ear cress), this protein is Formin-like protein 15a (FH15A).